The primary structure comprises 363 residues: Probable F-box protein At4g22165 (363 aa).

The F-box domain occupies 7 to 56 (PNTWSELPLDLLNLVFKRLSLVNFQRAKSVCSTRYSVSRQCVPERQIALL).

This is Probable F-box protein At4g22165 from Arabidopsis thaliana (Mouse-ear cress).